Here is a 332-residue protein sequence, read N- to C-terminus: Succinylglutamate desuccinylase (332 aa).

Zn(2+) contacts are provided by His59, Glu62, and His151. Glu215 is a catalytic residue.

Belongs to the AspA/AstE family. Succinylglutamate desuccinylase subfamily. Requires Zn(2+) as cofactor.

It catalyses the reaction N-succinyl-L-glutamate + H2O = L-glutamate + succinate. It functions in the pathway amino-acid degradation; L-arginine degradation via AST pathway; L-glutamate and succinate from L-arginine: step 5/5. Transforms N(2)-succinylglutamate into succinate and glutamate. The protein is Succinylglutamate desuccinylase of Pseudomonas paraeruginosa (strain DSM 24068 / PA7) (Pseudomonas aeruginosa (strain PA7)).